Consider the following 348-residue polypeptide: Serine/threonine-protein kinase SBK2 (348 aa).

Positions 1–25 are disordered; the sequence is MPGKQSEEGPAEAGASEDSEEEGLG. The 269-residue stretch at 62–330 folds into the Protein kinase domain; that stretch reads YEEVRPLGQG…IREHLGRPWR (269 aa). ATP-binding positions include 68 to 76 and Lys-91; that span reads LGQGCYGRV. Catalysis depends on Asp-183, which acts as the Proton acceptor.

It belongs to the protein kinase superfamily. Ser/Thr protein kinase family. STKL subfamily.

It catalyses the reaction L-seryl-[protein] + ATP = O-phospho-L-seryl-[protein] + ADP + H(+). It carries out the reaction L-threonyl-[protein] + ATP = O-phospho-L-threonyl-[protein] + ADP + H(+). The chain is Serine/threonine-protein kinase SBK2 (SBK2) from Homo sapiens (Human).